A 119-amino-acid polypeptide reads, in one-letter code: Large ribosomal subunit protein bL19 (119 aa).

The protein belongs to the bacterial ribosomal protein bL19 family.

In terms of biological role, this protein is located at the 30S-50S ribosomal subunit interface and may play a role in the structure and function of the aminoacyl-tRNA binding site. This Mycoplasma pneumoniae (strain ATCC 29342 / M129 / Subtype 1) (Mycoplasmoides pneumoniae) protein is Large ribosomal subunit protein bL19 (rplS).